The chain runs to 590 residues: Beta-glucosidase 29 (590 aa).

The N-terminal stretch at 1 to 21 (MNVQIFILLLIISWLTPKITS) is a signal peptide. Residues glutamine 48, histidine 151, and 196–197 (NE) each bind a beta-D-glucoside. The active-site Proton donor is the glutamate 197. A disulfide bridge links cysteine 216 with cysteine 224. Asparagine 255 and asparagine 331 each carry an N-linked (GlcNAc...) asparagine glycan. Tyrosine 341 serves as a coordination point for a beta-D-glucoside. An N-linked (GlcNAc...) asparagine glycan is attached at asparagine 371. A beta-D-glucoside is bound by residues glutamate 413, tryptophan 463, 470–471 (EW), and phenylalanine 479. The active-site Nucleophile is glutamate 413. Residues asparagine 522 and asparagine 553 are each glycosylated (N-linked (GlcNAc...) asparagine).

The protein belongs to the glycosyl hydrolase 1 family.

It carries out the reaction Hydrolysis of terminal, non-reducing beta-D-glucosyl residues with release of beta-D-glucose.. This Arabidopsis thaliana (Mouse-ear cress) protein is Beta-glucosidase 29.